The chain runs to 357 residues: Protein RecA (357 aa).

73–80 (GPESSGKT) is an ATP binding site.

The protein belongs to the RecA family.

The protein localises to the cytoplasm. Its function is as follows. Can catalyze the hydrolysis of ATP in the presence of single-stranded DNA, the ATP-dependent uptake of single-stranded DNA by duplex DNA, and the ATP-dependent hybridization of homologous single-stranded DNAs. It interacts with LexA causing its activation and leading to its autocatalytic cleavage. The sequence is that of Protein RecA from Nitratidesulfovibrio vulgaris (strain DSM 19637 / Miyazaki F) (Desulfovibrio vulgaris).